The sequence spans 500 residues: NAD(P)H-quinone oxidoreductase subunit 2 A, chloroplastic (500 aa).

Helical transmembrane passes span 14–34 (LLLFDGSLIFPECILIFGLIL), 47–67 (IPWFYFISSTSLVMSITALLF), 89–109 (IFQFLILLCSTLSIPLSVEYI), 114–134 (MAITEFLLFILTATLGGMFLC), 139–159 (FITIFVAPECFSLCSYLLSGY), 173–193 (YLLMGGASSSILVHAFSWLYG), 217–237 (PGISIALIFITVGIGFKLSPA), 285–305 (WHLLLEILAILSMILGNLIAI), 313–333 (MLAYSSIGQIGYVIIGIIVGD), 344–364 (YMLFYISMNLGTFACIVLFGL), 385–405 (ALSLALCLLSLGGLPPLAGFF), 408–428 (LHLFWCGWQAGLSFLVSIGLL), and 474–494 (MIVCVIASTIPGISMNPIIAI).

It belongs to the complex I subunit 2 family. In terms of assembly, NDH is composed of at least 16 different subunits, 5 of which are encoded in the nucleus.

The protein localises to the plastid. It localises to the chloroplast thylakoid membrane. It carries out the reaction a plastoquinone + NADH + (n+1) H(+)(in) = a plastoquinol + NAD(+) + n H(+)(out). The catalysed reaction is a plastoquinone + NADPH + (n+1) H(+)(in) = a plastoquinol + NADP(+) + n H(+)(out). Its function is as follows. NDH shuttles electrons from NAD(P)H:plastoquinone, via FMN and iron-sulfur (Fe-S) centers, to quinones in the photosynthetic chain and possibly in a chloroplast respiratory chain. The immediate electron acceptor for the enzyme in this species is believed to be plastoquinone. Couples the redox reaction to proton translocation, and thus conserves the redox energy in a proton gradient. This Pelargonium hortorum (Common geranium) protein is NAD(P)H-quinone oxidoreductase subunit 2 A, chloroplastic.